The sequence spans 242 residues: tRNA pseudouridine synthase A (242 aa).

The Nucleophile role is filled by Asp-51. Tyr-107 contributes to the substrate binding site.

The protein belongs to the tRNA pseudouridine synthase TruA family. Homodimer.

It carries out the reaction uridine(38/39/40) in tRNA = pseudouridine(38/39/40) in tRNA. Formation of pseudouridine at positions 38, 39 and 40 in the anticodon stem and loop of transfer RNAs. The sequence is that of tRNA pseudouridine synthase A from Helicobacter pylori (strain ATCC 700392 / 26695) (Campylobacter pylori).